The sequence spans 473 residues: MILEHHFASLGHAFSSKTHVQPLIEQRLVEFNQSLASFLSIDIKSTETKCILSGEEALPYSLSMVYAGHQFGGFSPQLGDGRGVLLGEVRGQDGLLYDLHMKGAGPTPYSRRGDGRAVLRSCIREYLASEAMTALSVPSSRALALYDSREAVYRETPEAGAMLLRVAQGHIRFGHFEYFFYQGKQAELDQLIEYCLEHYYPECLATDSPLESMLTEVVKRTARMIAKWQAIGFQHGVMNTDNFSFTGETIDYGPYGFMEDYEPDWVCNHSDHEGRYAFSRQPGVGLWNLNCLMRCFSKHLERDQLIAILQCYEPELQTHYDSLMMSKMGLTSTQDVHELLPALFTILAAEKMDYTVFFRLLSHYEQGEFAFLLDEVIDRERLLAWLERYEVARDKGGLLWSQASASMLAVNPKFILRNYLAHEAIVAAEQGDYLPFRRLLNVLTHPFGEHSESESLAQRAPEWGKSLEVSCSS.

Residues Gly79, Gly81, Arg82, Lys102, Asp114, Gly115, Arg165, and Arg172 each coordinate ATP. Asp241 acts as the Proton acceptor in catalysis. Positions 242 and 251 each coordinate Mg(2+). Asp251 provides a ligand contact to ATP.

It belongs to the SELO family. Requires Mg(2+) as cofactor. Mn(2+) is required as a cofactor.

The catalysed reaction is L-seryl-[protein] + ATP = 3-O-(5'-adenylyl)-L-seryl-[protein] + diphosphate. It catalyses the reaction L-threonyl-[protein] + ATP = 3-O-(5'-adenylyl)-L-threonyl-[protein] + diphosphate. The enzyme catalyses L-tyrosyl-[protein] + ATP = O-(5'-adenylyl)-L-tyrosyl-[protein] + diphosphate. It carries out the reaction L-histidyl-[protein] + UTP = N(tele)-(5'-uridylyl)-L-histidyl-[protein] + diphosphate. The catalysed reaction is L-seryl-[protein] + UTP = O-(5'-uridylyl)-L-seryl-[protein] + diphosphate. It catalyses the reaction L-tyrosyl-[protein] + UTP = O-(5'-uridylyl)-L-tyrosyl-[protein] + diphosphate. Its function is as follows. Nucleotidyltransferase involved in the post-translational modification of proteins. It can catalyze the addition of adenosine monophosphate (AMP) or uridine monophosphate (UMP) to a protein, resulting in modifications known as AMPylation and UMPylation. The polypeptide is Protein nucleotidyltransferase YdiU (Marinomonas sp. (strain MWYL1)).